We begin with the raw amino-acid sequence, 390 residues long: 1-deoxy-D-xylulose 5-phosphate reductoisomerase (390 aa).

5 residues coordinate NADPH: T18, G19, S20, I21, and N130. K131 contributes to the 1-deoxy-D-xylulose 5-phosphate binding site. E132 contributes to the NADPH binding site. D156 is a binding site for Mn(2+). Positions 157, 158, 182, and 205 each coordinate 1-deoxy-D-xylulose 5-phosphate. E158 contributes to the Mn(2+) binding site. Residue G211 participates in NADPH binding. 1-deoxy-D-xylulose 5-phosphate contacts are provided by S218, N223, K224, and E227. E227 lines the Mn(2+) pocket.

It belongs to the DXR family. Requires Mg(2+) as cofactor. It depends on Mn(2+) as a cofactor.

It catalyses the reaction 2-C-methyl-D-erythritol 4-phosphate + NADP(+) = 1-deoxy-D-xylulose 5-phosphate + NADPH + H(+). Its pathway is isoprenoid biosynthesis; isopentenyl diphosphate biosynthesis via DXP pathway; isopentenyl diphosphate from 1-deoxy-D-xylulose 5-phosphate: step 1/6. In terms of biological role, catalyzes the NADPH-dependent rearrangement and reduction of 1-deoxy-D-xylulose-5-phosphate (DXP) to 2-C-methyl-D-erythritol 4-phosphate (MEP). This Bacteroides thetaiotaomicron (strain ATCC 29148 / DSM 2079 / JCM 5827 / CCUG 10774 / NCTC 10582 / VPI-5482 / E50) protein is 1-deoxy-D-xylulose 5-phosphate reductoisomerase.